Reading from the N-terminus, the 438-residue chain is Thymidine phosphorylase (438 aa).

This sequence belongs to the thymidine/pyrimidine-nucleoside phosphorylase family. In terms of assembly, homodimer.

The catalysed reaction is thymidine + phosphate = 2-deoxy-alpha-D-ribose 1-phosphate + thymine. It functions in the pathway pyrimidine metabolism; dTMP biosynthesis via salvage pathway; dTMP from thymine: step 1/2. In terms of biological role, the enzymes which catalyze the reversible phosphorolysis of pyrimidine nucleosides are involved in the degradation of these compounds and in their utilization as carbon and energy sources, or in the rescue of pyrimidine bases for nucleotide synthesis. The polypeptide is Thymidine phosphorylase (Burkholderia orbicola (strain AU 1054)).